Reading from the N-terminus, the 995-residue chain is Integrator complex subunit 8 (995 aa).

T18 carries the phosphothreonine modification. The WFEF motif motif lies at 24–29 (WFEFLL). TPR repeat units follow at residues 250 to 288 (CQVCYDLGAAYFQQGSTDSAIYENAREKFFRTKELLAEI), 320 to 356 (SQQLTPYSQVHICLRSGSYQEVVQIFIEDNLTFTLPV), 570 to 603 (VYILMAKGLHCSTVKDFPHSKQLFTACLELVTEF), and 833 to 866 (HAWLIIQADIYFATNQHSAALHYYLQAGAVCSDF).

It belongs to the Integrator subunit 8 family. In terms of assembly, component of the Integrator complex, composed of core subunits INTS1, INTS2, INTS3, INTS4, INTS5, INTS6, INTS7, INTS8, INTS9/RC74, INTS10, INTS11/CPSF3L, INTS12, INTS13, INTS14 and INTS15. The core complex associates with protein phosphatase 2A subunits PPP2CA and PPP2R1A, to form the Integrator-PP2A (INTAC) complex.

It is found in the nucleus. The protein localises to the chromosome. In terms of biological role, component of the integrator complex, a multiprotein complex that terminates RNA polymerase II (Pol II) transcription in the promoter-proximal region of genes. The integrator complex provides a quality checkpoint during transcription elongation by driving premature transcription termination of transcripts that are unfavorably configured for transcriptional elongation: the complex terminates transcription by (1) catalyzing dephosphorylation of the C-terminal domain (CTD) of Pol II subunit POLR2A/RPB1 and SUPT5H/SPT5, (2) degrading the exiting nascent RNA transcript via endonuclease activity and (3) promoting the release of Pol II from bound DNA. The integrator complex is also involved in terminating the synthesis of non-coding Pol II transcripts, such as enhancer RNAs (eRNAs), small nuclear RNAs (snRNAs), telomerase RNAs and long non-coding RNAs (lncRNAs). Within the integrator complex, INTS8 is required for the recruitment of protein phosphatase 2A (PP2A) to transcription pause-release checkpoint. The chain is Integrator complex subunit 8 (Ints8) from Mus musculus (Mouse).